Here is a 122-residue protein sequence, read N- to C-terminus: MSGKHPLVQAIENSQLKTDLPEFAPGDTVVVQVKVKEGDRERLQAFEGVVIAKKNRGLNSAFTVRKISSGVGVERVFQTHSPVVAKIEVKRRGDVRRAKLYYLRDLSGKAARIREKLPARKA.

It belongs to the bacterial ribosomal protein bL19 family.

This protein is located at the 30S-50S ribosomal subunit interface and may play a role in the structure and function of the aminoacyl-tRNA binding site. The protein is Large ribosomal subunit protein bL19 of Acinetobacter baumannii (strain AB307-0294).